A 194-amino-acid chain; its full sequence is Molybdenum cofactor guanylyltransferase (194 aa).

Residues 12-14 (LAG), Lys25, Asn53, Asp70, and Asp100 each bind GTP. Asp100 lines the Mg(2+) pocket.

The protein belongs to the MobA family. As to quaternary structure, monomer. Requires Mg(2+) as cofactor.

It localises to the cytoplasm. The enzyme catalyses Mo-molybdopterin + GTP + H(+) = Mo-molybdopterin guanine dinucleotide + diphosphate. Transfers a GMP moiety from GTP to Mo-molybdopterin (Mo-MPT) cofactor (Moco or molybdenum cofactor) to form Mo-molybdopterin guanine dinucleotide (Mo-MGD) cofactor. The protein is Molybdenum cofactor guanylyltransferase of Aliivibrio fischeri (strain MJ11) (Vibrio fischeri).